We begin with the raw amino-acid sequence, 358 residues long: Phospho-N-acetylmuramoyl-pentapeptide-transferase (358 aa).

10 helical membrane-spanning segments follow: residues 28-48 (WALATALLVSIVVGPRFIAWL), 72-92 (TMGGLLIGFAVTFSVLLWADL), 96-116 (YIWLTLLVFTGFGFIGFLDDY), 133-153 (FLWQVGVAVAAMYLLVQLPAY), 164-184 (GLTPDLGWLYIPFAVAVMVGS), 196-216 (GLAIGPTIVAGIVFSIFIYVA), 233-253 (VGEVAVFCGALVGAGLGFLWF), 260-280 (VFMGDVGSLSLGGTLGFLAVL), 285-305 (LLLLVVGGLFVVETLSVILQV), and 335-355 (KIIIRFWITSALLGLIALSVL).

Belongs to the glycosyltransferase 4 family. MraY subfamily. Mg(2+) serves as cofactor.

The protein resides in the cell inner membrane. It catalyses the reaction UDP-N-acetyl-alpha-D-muramoyl-L-alanyl-gamma-D-glutamyl-meso-2,6-diaminopimeloyl-D-alanyl-D-alanine + di-trans,octa-cis-undecaprenyl phosphate = di-trans,octa-cis-undecaprenyl diphospho-N-acetyl-alpha-D-muramoyl-L-alanyl-D-glutamyl-meso-2,6-diaminopimeloyl-D-alanyl-D-alanine + UMP. It participates in cell wall biogenesis; peptidoglycan biosynthesis. In terms of biological role, catalyzes the initial step of the lipid cycle reactions in the biosynthesis of the cell wall peptidoglycan: transfers peptidoglycan precursor phospho-MurNAc-pentapeptide from UDP-MurNAc-pentapeptide onto the lipid carrier undecaprenyl phosphate, yielding undecaprenyl-pyrophosphoryl-MurNAc-pentapeptide, known as lipid I. The chain is Phospho-N-acetylmuramoyl-pentapeptide-transferase from Nitratidesulfovibrio vulgaris (strain ATCC 29579 / DSM 644 / CCUG 34227 / NCIMB 8303 / VKM B-1760 / Hildenborough) (Desulfovibrio vulgaris).